Reading from the N-terminus, the 168-residue chain is uncharacterized protein (168 aa).

An N-terminal signal peptide occupies residues 1-21 (MVYEVLAVVSGGLLGFGVTWA).

This is an uncharacterized protein from Archaeoglobus fulgidus (strain ATCC 49558 / DSM 4304 / JCM 9628 / NBRC 100126 / VC-16).